The primary structure comprises 533 residues: GMP synthase [glutamine-hydrolyzing] (533 aa).

Residues 22–215 (RILILDFGSQ…THNVAGCSGT (194 aa)) enclose the Glutamine amidotransferase type-1 domain. Catalysis depends on cysteine 99, which acts as the Nucleophile. Catalysis depends on residues histidine 189 and glutamate 191. One can recognise a GMPS ATP-PPase domain in the interval 216–408 (WTMAGFRELE…LGIPESIVGR (193 aa)). 243 to 249 (SGGVDSS) is a binding site for ATP.

In terms of assembly, homodimer.

The catalysed reaction is XMP + L-glutamine + ATP + H2O = GMP + L-glutamate + AMP + diphosphate + 2 H(+). Its pathway is purine metabolism; GMP biosynthesis; GMP from XMP (L-Gln route): step 1/1. Catalyzes the synthesis of GMP from XMP. This is GMP synthase [glutamine-hydrolyzing] from Gluconobacter oxydans (strain 621H) (Gluconobacter suboxydans).